Consider the following 257-residue polypeptide: Alcohol dehydrogenase 1 (257 aa).

Residue 9-33 (VFVGGLGFIGYEACKTLITRDLASL) coordinates NAD(+). S137 is a binding site for substrate. Y150 (proton acceptor) is an active-site residue.

This sequence belongs to the short-chain dehydrogenases/reductases (SDR) family. Homodimer.

The catalysed reaction is a primary alcohol + NAD(+) = an aldehyde + NADH + H(+). It catalyses the reaction a secondary alcohol + NAD(+) = a ketone + NADH + H(+). This chain is Alcohol dehydrogenase 1 (ADH1), found in Ceratitis cosyra (Mango fruit fly).